We begin with the raw amino-acid sequence, 119 residues long: Phosphoribosyl-AMP cyclohydrolase (119 aa).

Asp-77 serves as a coordination point for Mg(2+). Cys-78 contacts Zn(2+). 2 residues coordinate Mg(2+): Asp-79 and Asp-81. Zn(2+) contacts are provided by Cys-94 and Cys-101.

It belongs to the PRA-CH family. In terms of assembly, homodimer. The cofactor is Mg(2+). Requires Zn(2+) as cofactor.

It localises to the cytoplasm. The enzyme catalyses 1-(5-phospho-beta-D-ribosyl)-5'-AMP + H2O = 1-(5-phospho-beta-D-ribosyl)-5-[(5-phospho-beta-D-ribosylamino)methylideneamino]imidazole-4-carboxamide. It participates in amino-acid biosynthesis; L-histidine biosynthesis; L-histidine from 5-phospho-alpha-D-ribose 1-diphosphate: step 3/9. Functionally, catalyzes the hydrolysis of the adenine ring of phosphoribosyl-AMP. The sequence is that of Phosphoribosyl-AMP cyclohydrolase from Cereibacter sphaeroides (strain KD131 / KCTC 12085) (Rhodobacter sphaeroides).